We begin with the raw amino-acid sequence, 473 residues long: Serine palmitoyltransferase 1 (473 aa).

The Lumenal segment spans residues Met-1–Gln-15. The interaction with SPTLC2 stretch occupies residues Met-1–Pro-66. The helical transmembrane segment at Ala-16–Ile-36 threads the bilayer. Residues Arg-37–Leu-473 are Cytoplasmic-facing. The residue at position 164 (Tyr-164) is a Phosphotyrosine; by ABL.

It belongs to the class-II pyridoxal-phosphate-dependent aminotransferase family. Component of the serine palmitoyltransferase (SPT) complex, which is also composed of SPTLC2 or SPTLC3 and SPTSSA or SPTSSB. The heterodimer with SPTLC2 or SPTLC3 forms the catalytic core of the enzyme, while SPTSSA or SPTSSB subunits determine substrate specificity. SPT also interacts with ORMDL proteins, especially ORMDL3, which negatively regulate SPT activity in the presence of ceramides. Forms dimers of heterodimers with SPTLC2. Interacts with RTN4. It depends on pyridoxal 5'-phosphate as a cofactor. In terms of processing, phosphorylation at Tyr-164 inhibits activity and promotes cell survival.

It is found in the endoplasmic reticulum membrane. It carries out the reaction L-serine + hexadecanoyl-CoA + H(+) = 3-oxosphinganine + CO2 + CoA. It catalyses the reaction octadecanoyl-CoA + L-serine + H(+) = 3-oxoeicosasphinganine + CO2 + CoA. The catalysed reaction is tetradecanoyl-CoA + L-serine + H(+) = 3-oxohexadecasphinganine + CO2 + CoA. The enzyme catalyses dodecanoyl-CoA + L-serine + H(+) = 3-oxotetradecasphinganine + CO2 + CoA. It functions in the pathway lipid metabolism; sphingolipid metabolism. SPT complex catalytic activity is negatively regulated by ORMDL proteins, including ORMDL3, in the presence of ceramides. This mechanism allows to maintain ceramide levels at sufficient concentrations for the production of complex sphingolipids, but which prevents the accumulation of ceramides to levels that trigger apoptosis. In terms of biological role, component of the serine palmitoyltransferase multisubunit enzyme (SPT) that catalyzes the initial and rate-limiting step in sphingolipid biosynthesis by condensing L-serine and activated acyl-CoA (most commonly palmitoyl-CoA) to form long-chain bases. The SPT complex is also composed of SPTLC2 or SPTLC3 and SPTSSA or SPTSSB. Within this complex, the heterodimer with SPTLC2 or SPTLC3 forms the catalytic core. The composition of the serine palmitoyltransferase (SPT) complex determines the substrate preference. The SPTLC1-SPTLC2-SPTSSA complex shows a strong preference for C16-CoA substrate, while the SPTLC1-SPTLC3-SPTSSA isozyme uses both C14-CoA and C16-CoA as substrates, with a slight preference for C14-CoA. The SPTLC1-SPTLC2-SPTSSB complex shows a strong preference for C18-CoA substrate, while the SPTLC1-SPTLC3-SPTSSB isozyme displays an ability to use a broader range of acyl-CoAs, without apparent preference. Required for adipocyte cell viability and metabolic homeostasis. The polypeptide is Serine palmitoyltransferase 1 (SPTLC1) (Macaca fascicularis (Crab-eating macaque)).